Here is a 512-residue protein sequence, read N- to C-terminus: Glycerol kinase 2 (512 aa).

Position 18 (T18) interacts with ADP. ATP-binding residues include T18, T19, and S20. Residue T18 coordinates sn-glycerol 3-phosphate. ADP is bound at residue R22. Sn-glycerol 3-phosphate contacts are provided by R88, E89, Y140, and D255. Residues R88, E89, Y140, D255, and Q256 each contribute to the glycerol site. Residues T277 and G321 each contribute to the ADP site. ATP contacts are provided by T277, G321, Q325, and G422. G422 and N426 together coordinate ADP.

It belongs to the FGGY kinase family.

The catalysed reaction is glycerol + ATP = sn-glycerol 3-phosphate + ADP + H(+). Its pathway is polyol metabolism; glycerol degradation via glycerol kinase pathway; sn-glycerol 3-phosphate from glycerol: step 1/1. Inhibited by fructose 1,6-bisphosphate (FBP). Functionally, key enzyme in the regulation of glycerol uptake and metabolism. Catalyzes the phosphorylation of glycerol to yield sn-glycerol 3-phosphate. This chain is Glycerol kinase 2, found in Streptomyces coelicolor (strain ATCC BAA-471 / A3(2) / M145).